A 409-amino-acid chain; its full sequence is NADH-quinone oxidoreductase subunit D (409 aa).

The protein belongs to the complex I 49 kDa subunit family. As to quaternary structure, NDH-1 is composed of 14 different subunits. Subunits NuoB, C, D, E, F, and G constitute the peripheral sector of the complex.

It is found in the cell inner membrane. The catalysed reaction is a quinone + NADH + 5 H(+)(in) = a quinol + NAD(+) + 4 H(+)(out). In terms of biological role, NDH-1 shuttles electrons from NADH, via FMN and iron-sulfur (Fe-S) centers, to quinones in the respiratory chain. The immediate electron acceptor for the enzyme in this species is believed to be ubiquinone. Couples the redox reaction to proton translocation (for every two electrons transferred, four hydrogen ions are translocated across the cytoplasmic membrane), and thus conserves the redox energy in a proton gradient. This chain is NADH-quinone oxidoreductase subunit D, found in Helicobacter pylori (strain Shi470).